The following is a 398-amino-acid chain: MSDVLLVLNAGSSSIKFALYEAHTEPTADHLICEGGIGSLGHRPHFKVVNSDGSTRYDTYLPEGTSHDDAMAVLIGWIETTFPEHRLSAVGHRVVHGGALFDGPVDVTPEVIAQLRAFDRLAPLHQPHNVSAIEALAKLHPSLTQIACFDTAFHHRLPEVATAFALPRELTEQGVRRYGFHGLSYEYIAGRLPDVAGQAVADGRVVVAHLGAGASMCAMLRCRSIATTMGFTALDGLMMGSRCGELDPGVVLYLLEEKSMTAREIEDLLYRESGLLGVSGISDDMRTLLASDDPHACEAIELFVYRIARELGSLAAALGGLDALVFTGGIGEHASEIRRRVCEQAAWLGVTLDPDANARLSGAGRISAPDSKVSAWAIPTDEDLMIARHVWRLADGGR.

Asn9 is a Mg(2+) binding site. Lys16 contacts ATP. Arg93 contributes to the substrate binding site. The active-site Proton donor/acceptor is Asp150. ATP contacts are provided by residues 209–213, 284–286, and 329–333; these read HLGAG, DMR, and GIGEH. Glu382 lines the Mg(2+) pocket.

It belongs to the acetokinase family. As to quaternary structure, homodimer. Requires Mg(2+) as cofactor. The cofactor is Mn(2+).

The protein localises to the cytoplasm. The catalysed reaction is acetate + ATP = acetyl phosphate + ADP. It participates in metabolic intermediate biosynthesis; acetyl-CoA biosynthesis; acetyl-CoA from acetate: step 1/2. In terms of biological role, catalyzes the formation of acetyl phosphate from acetate and ATP. Can also catalyze the reverse reaction. This chain is Acetate kinase, found in Rhodopseudomonas palustris (strain TIE-1).